The sequence spans 203 residues: MSAIGHSPTACSRCSRPRLRRKDLTSVLSPRLPCFKVSSSGEAFATDKADFITPKDLDDPCASPGWEASSLAQAKRYGKSKMANVLFAAELQRRMDAEGVDIISISLNPGPVKTQGAADVLPFMVRPMVWLFFKDPAEGAQTTLFAAAAAEIREEKERWKGGYLDGPGKLKSPSPRARDPQVAYNLWHTTESAVRAIGVLDKS.

Aspartate 23, tyrosine 77, and lysine 81 together coordinate NADP(+). The active-site Proton acceptor is tyrosine 77. Lysine 81 (lowers pKa of active site Tyr) is an active-site residue.

It belongs to the short-chain dehydrogenases/reductases (SDR) family.

The protein operates within secondary metabolite biosynthesis; terpenoid biosynthesis. Functionally, short chain dehydrogenase/reductase; part of the gene cluster that mediates the biosynthesis of diterpenoid pyrones. The first step of the pathway is the synthesis of the alpha-pyrone moiety by the polyketide synthase dpmpA via condensation of one acetyl-CoA starter unit with 3 malonyl-CoA units and 2 methylations. The alpha-pyrone is then combined with geranylgeranyl pyrophosphate (GGPP) formed by the GGPP synthase dpmpD through the action of the prenyltransferase dpmpC to yield a linear alpha-pyrone diterpenoid. Subsequent steps in the diterpenoid pyrone biosynthetic pathway involve the decalin core formation, which is initiated by the epoxidation of the C10-C11 olefin by the FAD-dependent oxidoreductase dpmpE, and is followed by a cyclization cascade catalyzed by the terpene cyclase dpmpB. The short chain dehydrogenase/reductase dpmpG then oxidizes the 8S hydroxy group to a ketone and the short chain dehydrogenase/reductase dpmpH reduces the ketone to the 8R hydroxy group to yield higginsianin B. Higginsianin B is further methylated by the methyltransferase dpmpI to produce the intermediate named FDDP B. The cytochrome P450 monooxygenase dpmpJ then oxidizes the C-26 methyl to primary alcohol, producing the final diterpenoid pyrone with a C-26 primary alcohol on the gamma-pyrone moiety named FDDP C. In Macrophomina phaseolina (strain MS6) (Charcoal rot fungus), this protein is Short chain dehydrogenase/reductase dpmpH.